Here is a 95-residue protein sequence, read N- to C-terminus: Small ribosomal subunit protein bS6 (95 aa).

Belongs to the bacterial ribosomal protein bS6 family.

Functionally, binds together with bS18 to 16S ribosomal RNA. This Streptococcus agalactiae serotype Ia (strain ATCC 27591 / A909 / CDC SS700) protein is Small ribosomal subunit protein bS6.